The following is a 271-amino-acid chain: Putative phosphoenolpyruvate synthase regulatory protein (271 aa).

An ADP-binding site is contributed by 151–158 (GVSRSGKT).

It belongs to the pyruvate, phosphate/water dikinase regulatory protein family. PSRP subfamily.

The catalysed reaction is [pyruvate, water dikinase] + ADP = [pyruvate, water dikinase]-phosphate + AMP + H(+). It carries out the reaction [pyruvate, water dikinase]-phosphate + phosphate + H(+) = [pyruvate, water dikinase] + diphosphate. In terms of biological role, bifunctional serine/threonine kinase and phosphorylase involved in the regulation of the phosphoenolpyruvate synthase (PEPS) by catalyzing its phosphorylation/dephosphorylation. The sequence is that of Putative phosphoenolpyruvate synthase regulatory protein from Burkholderia orbicola (strain MC0-3).